Here is a 100-residue protein sequence, read N- to C-terminus: Integration host factor subunit alpha (100 aa).

It belongs to the bacterial histone-like protein family. Heterodimer of an alpha and a beta chain.

In terms of biological role, this protein is one of the two subunits of integration host factor, a specific DNA-binding protein that functions in genetic recombination as well as in transcriptional and translational control. The polypeptide is Integration host factor subunit alpha (Alcanivorax borkumensis (strain ATCC 700651 / DSM 11573 / NCIMB 13689 / SK2)).